The chain runs to 455 residues: N-acetyl-S-(2-succino)cysteine lyase (455 aa).

Fumarate is bound at residue 106-107; it reads TT. Catalysis depends on H154, which acts as the Proton donor/acceptor. R233 is a fumarate binding site. The active-site Proton donor/acceptor is S277. Fumarate-binding positions include S278 and 283–285; that span reads KRN.

It belongs to the lyase 1 family.

It catalyses the reaction N-acetyl-S-(2-succino)-L-cysteine = N-acetyl-L-cysteine + fumarate. It functions in the pathway amino-acid biosynthesis; L-cysteine biosynthesis. Functionally, catalyzes the cleavage of N-acetyl-S-(2-succino)cysteine into fumarate and N-acetylcysteine. Is involved in a S-(2-succino)cysteine (2SC) degradation pathway that allows the bacterium to recover cysteine from 2SC and to detoxify 2SC that may be a toxic metabolite. Can also perform the reverse reaction in vitro, and has minor activity against 2SC and other small molecule thiols. This is N-acetyl-S-(2-succino)cysteine lyase from Enterococcus italicus (strain DSM 15952 / CCUG 50447 / LMG 22039 / TP 1.5).